Here is a 259-residue protein sequence, read N- to C-terminus: Hydroxyacylglutathione hydrolase (259 aa).

Positions 56, 58, 60, 61, 112, 133, and 171 each coordinate Zn(2+).

The protein belongs to the metallo-beta-lactamase superfamily. Glyoxalase II family. As to quaternary structure, monomer. Zn(2+) serves as cofactor.

It catalyses the reaction an S-(2-hydroxyacyl)glutathione + H2O = a 2-hydroxy carboxylate + glutathione + H(+). It functions in the pathway secondary metabolite metabolism; methylglyoxal degradation; (R)-lactate from methylglyoxal: step 2/2. Functionally, thiolesterase that catalyzes the hydrolysis of S-D-lactoyl-glutathione to form glutathione and D-lactic acid. The protein is Hydroxyacylglutathione hydrolase of Pseudomonas putida (strain W619).